The sequence spans 259 residues: Large ribosomal subunit protein eL8 (259 aa).

Positions 1–24 (MAPKSKKVAPSPFAQPKAAKTTKN) are disordered. 2 positions are modified to phosphoserine: Ser11 and Ser33.

Belongs to the eukaryotic ribosomal protein eL8 family. As to quaternary structure, component of the large ribosomal subunit (LSU). Mature yeast ribosomes consist of a small (40S) and a large (60S) subunit. The 40S small subunit contains 1 molecule of ribosomal RNA (18S rRNA) and at least 33 different proteins. The large 60S subunit contains 3 rRNA molecules (25S, 5.8S and 5S rRNA) and at least 46 different proteins.

It is found in the cytoplasm. In terms of biological role, component of the ribosome, a large ribonucleoprotein complex responsible for the synthesis of proteins in the cell. The small ribosomal subunit (SSU) binds messenger RNAs (mRNAs) and translates the encoded message by selecting cognate aminoacyl-transfer RNA (tRNA) molecules. The large subunit (LSU) contains the ribosomal catalytic site termed the peptidyl transferase center (PTC), which catalyzes the formation of peptide bonds, thereby polymerizing the amino acids delivered by tRNAs into a polypeptide chain. The nascent polypeptides leave the ribosome through a tunnel in the LSU and interact with protein factors that function in enzymatic processing, targeting, and the membrane insertion of nascent chains at the exit of the ribosomal tunnel. This Schizosaccharomyces pombe (strain 972 / ATCC 24843) (Fission yeast) protein is Large ribosomal subunit protein eL8 (rpl8).